Consider the following 234-residue polypeptide: Preflagellin peptidase (234 aa).

Position 1 (M1) is a topological domain, cytoplasmic. Residues 2 to 18 (INFIVGAIGLLIASIYD) traverse the membrane as a helical segment. Over 19–23 (LKSRE) the chain is Extracellular. A helical transmembrane segment spans residues 24–46 (IEDYVWVSMVIFGLIYNGYLSFI). Residues 47–49 (SHD) lie on the Cytoplasmic side of the membrane. A helical transmembrane segment spans residues 50 to 72 (MLYVIQSIVGFIVCFFLGFFMFL). The Extracellular segment spans residues 73-78 (LGVGGG). The chain crosses the membrane as a helical span at residues 79 to 89 (DGKLIMGLGAL). Residues 90–110 (IPKYNMPIHTPLGAILNYLYL) are Cytoplasmic-facing. Residues 111–139 (PSFPIMVVINAMFFSITLPIIIFLRNVIR) traverse the membrane as a helical segment. Topologically, residues 140–205 (GVKPKTKKEV…EEIWVTPAIP (66 aa)) are extracellular. The helical transmembrane segment at 206–217 (FVVPIFLSYLLT) threads the bilayer. The Cytoplasmic segment spans residues 218 to 234 (SIIGDKIIGIFLSVFGL).

It belongs to the peptidase A24 family. Archaeal preflagellin peptidase subfamily.

The protein localises to the cell membrane. The enzyme catalyses Cleaves the signal peptide of 3 to 12 amino acids from the N-terminal of preflagellin, usually at Arg-Gly-|- or Lys-Gly-|-, to release flagellin.. Its function is as follows. Cleaves the N-terminal leader peptide from preflagellins. This Methanocaldococcus jannaschii (strain ATCC 43067 / DSM 2661 / JAL-1 / JCM 10045 / NBRC 100440) (Methanococcus jannaschii) protein is Preflagellin peptidase (flaK).